Consider the following 217-residue polypeptide: Peroxiredoxin (217 aa).

The Thioredoxin domain maps to 2–159 (AVIGEKFPDV…VVRLVKALQT (158 aa)). Cys46 functions as the Cysteine sulfenic acid (-SOH) intermediate in the catalytic mechanism. Residue Arg122 participates in substrate binding.

Belongs to the peroxiredoxin family. Prx6 subfamily. In terms of assembly, homodecamer. Pentamer of dimers that assemble into a ring structure.

It localises to the cytoplasm. The enzyme catalyses a hydroperoxide + [thioredoxin]-dithiol = an alcohol + [thioredoxin]-disulfide + H2O. Thiol-specific peroxidase that catalyzes the reduction of hydrogen peroxide and organic hydroperoxides to water and alcohols, respectively. Plays a role in cell protection against oxidative stress by detoxifying peroxides. This Methanococcus vannielii (strain ATCC 35089 / DSM 1224 / JCM 13029 / OCM 148 / SB) protein is Peroxiredoxin.